A 215-amino-acid polypeptide reads, in one-letter code: MPSYTLHYFNHRGRAEICRMLFAAAGVQYNDRRIESSEWNGMRNQMPCNMMPMLELDNRTQIPQSMAMARYLAREFGYHGKSNMEMARVDFISDCFYDIMDDYMRMYQDGNCRMMFQRSRDMNSSSESRMRFQETCRRILPFMERTLDMHSGGSKFFMGDQMTMADMMCYCALENPLMEESSMLSSYPKLMSLRNRVMSHPKMCNYLKKRCRTDF.

Residues 2–80 (PSYTLHYFNH…YLAREFGYHG (79 aa)) enclose the GST N-terminal domain. Residues 82–215 (SNMEMARVDF…YLKKRCRTDF (134 aa)) form the GST C-terminal domain.

The protein belongs to the GST superfamily. Lens.

In terms of biological role, S-crystallins are structural components of squids and octopi eye lens. Contains relatively little if any GST activity. This Enteroctopus dofleini (North Pacific giant octopus) protein is S-crystallin 3.